A 245-amino-acid chain; its full sequence is Ribonuclease 3 (245 aa).

In terms of domain architecture, RNase III spans 19–148 (FRAFQQKLGI…FIGALYLDQG (130 aa)). Position 61 (Glu-61) interacts with Mg(2+). Asp-65 is a catalytic residue. 2 residues coordinate Mg(2+): Asp-134 and Glu-137. Glu-137 is an active-site residue. The DRBM domain occupies 174–243 (DYKSQLQELI…AAEALRKLKE (70 aa)).

This sequence belongs to the ribonuclease III family. As to quaternary structure, homodimer. Mg(2+) is required as a cofactor.

The protein resides in the cytoplasm. It carries out the reaction Endonucleolytic cleavage to 5'-phosphomonoester.. Its function is as follows. Digests double-stranded RNA. Involved in the processing of primary rRNA transcript to yield the immediate precursors to the large and small rRNAs (23S and 16S). Processes some mRNAs, and tRNAs when they are encoded in the rRNA operon. Processes pre-crRNA and tracrRNA of type II CRISPR loci if present in the organism. This Bacillus cytotoxicus (strain DSM 22905 / CIP 110041 / 391-98 / NVH 391-98) protein is Ribonuclease 3.